The chain runs to 408 residues: LL-diaminopimelate aminotransferase (408 aa).

Tyrosine 15 and glycine 42 together coordinate substrate. Pyridoxal 5'-phosphate contacts are provided by residues tyrosine 72, 108–109, tyrosine 132, asparagine 187, tyrosine 218, and 246–248; these read SK and SFS. The substrate site is built by lysine 109, tyrosine 132, and asparagine 187. Residue lysine 249 is modified to N6-(pyridoxal phosphate)lysine. Pyridoxal 5'-phosphate-binding residues include arginine 257 and asparagine 292. Substrate contacts are provided by asparagine 292 and arginine 388.

The protein belongs to the class-I pyridoxal-phosphate-dependent aminotransferase family. LL-diaminopimelate aminotransferase subfamily. In terms of assembly, homodimer. Requires pyridoxal 5'-phosphate as cofactor.

It carries out the reaction (2S,6S)-2,6-diaminopimelate + 2-oxoglutarate = (S)-2,3,4,5-tetrahydrodipicolinate + L-glutamate + H2O + H(+). It functions in the pathway amino-acid biosynthesis; L-lysine biosynthesis via DAP pathway; LL-2,6-diaminopimelate from (S)-tetrahydrodipicolinate (aminotransferase route): step 1/1. Functionally, involved in the synthesis of meso-diaminopimelate (m-DAP or DL-DAP), required for both lysine and peptidoglycan biosynthesis. Catalyzes the direct conversion of tetrahydrodipicolinate to LL-diaminopimelate. In Parasynechococcus marenigrum (strain WH8102), this protein is LL-diaminopimelate aminotransferase.